The primary structure comprises 94 residues: Large ribosomal subunit protein bL27 (94 aa).

A propeptide spanning residues 1–9 (MLELNLQLF) is cleaved from the precursor. The disordered stretch occupies residues 12-33 (KKGGGSTSNGRDSQAKRLGAKA).

This sequence belongs to the bacterial ribosomal protein bL27 family. The N-terminus is cleaved by ribosomal processing cysteine protease Prp.

The chain is Large ribosomal subunit protein bL27 from Lactococcus lactis subsp. cremoris (strain MG1363).